The following is a 307-amino-acid chain: D-alanine--D-alanine ligase (307 aa).

The ATP-grasp domain maps to 101 to 301 (KTVMRAAGVS…FGELVRWMVE (201 aa)). Residue 127–182 (PLTPPYVVKPIAEGSSMGVIIVRDERSHPPQILASDEWVYGEEVLAETYVAGRELT) coordinates ATP. Residues aspartate 251, glutamate 268, and asparagine 270 each contribute to the Mg(2+) site.

The protein belongs to the D-alanine--D-alanine ligase family. Mg(2+) is required as a cofactor. Mn(2+) serves as cofactor.

It localises to the cytoplasm. The catalysed reaction is 2 D-alanine + ATP = D-alanyl-D-alanine + ADP + phosphate + H(+). Its pathway is cell wall biogenesis; peptidoglycan biosynthesis. In terms of biological role, cell wall formation. The polypeptide is D-alanine--D-alanine ligase (Methylorubrum extorquens (strain CM4 / NCIMB 13688) (Methylobacterium extorquens)).